Here is a 113-residue protein sequence, read N- to C-terminus: Endoribonuclease SymE (113 aa).

The 46-residue stretch at 29–74 folds into the SpoVT-AbrB domain; it reads SRYPDYSRIPAITLKGQWLEAAGFATGTAVDVKVMEGCIVLTAQPA.

Belongs to the SymE family.

Its subcellular location is the cytoplasm. Functionally, involved in the degradation and recycling of damaged RNA. It is itself a target for degradation by the ATP-dependent protease Lon. The sequence is that of Endoribonuclease SymE from Shigella flexneri serotype 5b (strain 8401).